The chain runs to 336 residues: Phenylalanine--tRNA ligase alpha subunit (336 aa).

E259 serves as a coordination point for Mg(2+).

The protein belongs to the class-II aminoacyl-tRNA synthetase family. Phe-tRNA synthetase alpha subunit type 1 subfamily. As to quaternary structure, tetramer of two alpha and two beta subunits. It depends on Mg(2+) as a cofactor.

The protein resides in the cytoplasm. The enzyme catalyses tRNA(Phe) + L-phenylalanine + ATP = L-phenylalanyl-tRNA(Phe) + AMP + diphosphate + H(+). This is Phenylalanine--tRNA ligase alpha subunit from Tropheryma whipplei (strain Twist) (Whipple's bacillus).